We begin with the raw amino-acid sequence, 484 residues long: Aspartyl/glutamyl-tRNA(Asn/Gln) amidotransferase subunit B (484 aa).

This sequence belongs to the GatB/GatE family. GatB subfamily. As to quaternary structure, heterotrimer of A, B and C subunits.

It carries out the reaction L-glutamyl-tRNA(Gln) + L-glutamine + ATP + H2O = L-glutaminyl-tRNA(Gln) + L-glutamate + ADP + phosphate + H(+). The catalysed reaction is L-aspartyl-tRNA(Asn) + L-glutamine + ATP + H2O = L-asparaginyl-tRNA(Asn) + L-glutamate + ADP + phosphate + 2 H(+). In terms of biological role, allows the formation of correctly charged Asn-tRNA(Asn) or Gln-tRNA(Gln) through the transamidation of misacylated Asp-tRNA(Asn) or Glu-tRNA(Gln) in organisms which lack either or both of asparaginyl-tRNA or glutaminyl-tRNA synthetases. The reaction takes place in the presence of glutamine and ATP through an activated phospho-Asp-tRNA(Asn) or phospho-Glu-tRNA(Gln). The polypeptide is Aspartyl/glutamyl-tRNA(Asn/Gln) amidotransferase subunit B (Anaeromyxobacter dehalogenans (strain 2CP-1 / ATCC BAA-258)).